The following is a 427-amino-acid chain: 3-phosphoshikimate 1-carboxyvinyltransferase (427 aa).

Residues Lys22, Ser23, and Arg27 each coordinate 3-phosphoshikimate. Lys22 lines the phosphoenolpyruvate pocket. Gly96 and Arg124 together coordinate phosphoenolpyruvate. Residues Ser169, Ser170, Gln171, Ser197, Asp313, Asn336, and Lys340 each coordinate 3-phosphoshikimate. Gln171 serves as a coordination point for phosphoenolpyruvate. Asp313 functions as the Proton acceptor in the catalytic mechanism. Phosphoenolpyruvate-binding residues include Arg344, Arg386, and Lys411.

It belongs to the EPSP synthase family. As to quaternary structure, monomer.

It localises to the cytoplasm. The catalysed reaction is 3-phosphoshikimate + phosphoenolpyruvate = 5-O-(1-carboxyvinyl)-3-phosphoshikimate + phosphate. Its pathway is metabolic intermediate biosynthesis; chorismate biosynthesis; chorismate from D-erythrose 4-phosphate and phosphoenolpyruvate: step 6/7. Catalyzes the transfer of the enolpyruvyl moiety of phosphoenolpyruvate (PEP) to the 5-hydroxyl of shikimate-3-phosphate (S3P) to produce enolpyruvyl shikimate-3-phosphate and inorganic phosphate. This chain is 3-phosphoshikimate 1-carboxyvinyltransferase, found in Shigella flexneri serotype 5b (strain 8401).